The following is a 1224-amino-acid chain: Probable serine/threonine-protein kinase DDB_G0292350 (1224 aa).

2 disordered regions span residues 57–98 (MSGS…STQR) and 252–284 (SSPS…DISN). 2 stretches are compositionally biased toward low complexity: residues 58–74 (SGSI…FTSS) and 83–95 (SSSN…SDNS). Coiled-coil stretches lie at residues 352–381 (LFKQ…KQNN) and 540–569 (DVQL…EYLT). Disordered stretches follow at residues 693-784 (QPIP…FVIT) and 815-836 (FTNN…TNNI). Low complexity predominate over residues 743–768 (NNNNNNNNNINNNNINNNNINNNKNG). Residues 772–784 (GETPSPSSSFVIT) are compositionally biased toward polar residues. In terms of domain architecture, Protein kinase spans 935–1193 (FRDKIKLGTG…PEMLLHHTFL (259 aa)). ATP is bound by residues 941 to 949 (LGTGAFGNV) and lysine 964. Residue aspartate 1063 is the Proton acceptor of the active site.

This sequence belongs to the protein kinase superfamily. Ser/Thr protein kinase family. It depends on Mg(2+) as a cofactor.

The enzyme catalyses L-seryl-[protein] + ATP = O-phospho-L-seryl-[protein] + ADP + H(+). It carries out the reaction L-threonyl-[protein] + ATP = O-phospho-L-threonyl-[protein] + ADP + H(+). This Dictyostelium discoideum (Social amoeba) protein is Probable serine/threonine-protein kinase DDB_G0292350.